The following is a 115-amino-acid chain: Large ribosomal subunit protein bL19 (115 aa).

Belongs to the bacterial ribosomal protein bL19 family.

This protein is located at the 30S-50S ribosomal subunit interface and may play a role in the structure and function of the aminoacyl-tRNA binding site. The protein is Large ribosomal subunit protein bL19 of Clostridium tetani (strain Massachusetts / E88).